Here is a 421-residue protein sequence, read N- to C-terminus: Lipid II:glycine glycyltransferase (421 aa).

This sequence belongs to the FemABX family. In terms of assembly, monomer.

The protein localises to the cytoplasm. The catalysed reaction is beta-D-GlcNAc-(1-&gt;4)-Mur2Ac(oyl-L-Ala-D-isoglutaminyl-L-Lys-D-Ala-D-Ala)-di-trans,octa-cis-undecaprenyl diphosphate + glycyl-tRNA(Gly) = beta-D-GlcNAc-(1-&gt;4)-Mur2Ac(oyl-L-Ala-D-isoglutaminyl-L-Lys-(N(6)-Gly)-D-Ala-D-Ala)-di-trans,octa-cis-undecaprenyl diphosphate + tRNA(Gly) + H(+). Functionally, catalyzes the incorporation of the first glycine of the pentaglycine interpeptide bridge, which is characteristic of the S.aureus peptidoglycan. This glycine is added to the epsilon-amino group of the L-lysine of the membrane-bound lipid II intermediate (GlcNAc-(beta-1,4)-N-acetylmuramic acid(-L-Ala-D-iGln-L-Lys-D-Ala-D-Ala)-pyrophosphoryl-undecaprenol), using glycyl-tRNA(Gly) as donor, in a ribosome-independent mechanism. Involved in methicillin resistance. This is Lipid II:glycine glycyltransferase (femX) from Staphylococcus aureus (strain MRSA252).